A 193-amino-acid chain; its full sequence is Sorting nexin-22 (193 aa).

Residues Met-1–Glu-21 are disordered. A PX domain is found at Met-1–Asn-118. A 1,2-diacyl-sn-glycero-3-phospho-(1D-myo-inositol-3-phosphate) is bound by residues Arg-43, Ser-45, Lys-66, and Arg-79.

This sequence belongs to the sorting nexin family. In terms of assembly, (Microbial infection) Interacts with P.falciparum (strain 3D7) CK1. As to expression, expressed in erythrocytes (at protein level).

It localises to the cytoplasmic vesicle membrane. Functionally, may be involved in several stages of intracellular trafficking. Interacts with membranes containing phosphatidylinositol 3-phosphate (PtdIns(3P)). This Homo sapiens (Human) protein is Sorting nexin-22 (SNX22).